A 350-amino-acid chain; its full sequence is Heat-inducible transcription repressor HrcA (350 aa).

Belongs to the HrcA family.

Functionally, negative regulator of class I heat shock genes (grpE-dnaK-dnaJ and groELS operons). Prevents heat-shock induction of these operons. The protein is Heat-inducible transcription repressor HrcA of Ligilactobacillus salivarius (strain UCC118) (Lactobacillus salivarius).